The chain runs to 342 residues: Phenylalanine--tRNA ligase alpha subunit (342 aa).

Glu257 is a binding site for Mg(2+).

This sequence belongs to the class-II aminoacyl-tRNA synthetase family. Phe-tRNA synthetase alpha subunit type 1 subfamily. In terms of assembly, tetramer of two alpha and two beta subunits. Mg(2+) is required as a cofactor.

The protein localises to the cytoplasm. The catalysed reaction is tRNA(Phe) + L-phenylalanine + ATP = L-phenylalanyl-tRNA(Phe) + AMP + diphosphate + H(+). The sequence is that of Phenylalanine--tRNA ligase alpha subunit from Legionella pneumophila subsp. pneumophila (strain Philadelphia 1 / ATCC 33152 / DSM 7513).